The sequence spans 174 residues: UPF0316 protein LMHCC_0787 (174 aa).

3 helical membrane passes run Gly4 to Val24, Leu36 to Leu56, and Ile62 to Ile82.

The protein belongs to the UPF0316 family.

The protein localises to the cell membrane. In Listeria monocytogenes serotype 4a (strain HCC23), this protein is UPF0316 protein LMHCC_0787.